The chain runs to 135 residues: Large ribosomal subunit protein uL16c (135 aa).

Belongs to the universal ribosomal protein uL16 family. Part of the 50S ribosomal subunit.

It localises to the plastid. It is found in the chloroplast. In Jasminum nudiflorum (Winter jasmine), this protein is Large ribosomal subunit protein uL16c.